Reading from the N-terminus, the 319-residue chain is Olfactory receptor 56B4 (319 aa).

Topologically, residues 1 to 31 are extracellular; the sequence is MDTSTSVTYDSSLQISQFILMGLPGIHEWQH. Residues 32 to 52 form a helical membrane-spanning segment; it reads WLSLPLTLLYLLALGANLLII. Topologically, residues 53-60 are cytoplasmic; sequence ITIQHETV. Residues 61 to 81 form a helical membrane-spanning segment; the sequence is LHEPMYHLLGILAVVDIGLAT. Topologically, residues 82–105 are extracellular; the sequence is TIMPKILAIFWFDAKAISLPMCFA. An intrachain disulfide couples cysteine 103 to cysteine 195. Residues 106-126 traverse the membrane as a helical segment; that stretch reads QIYAIHCFFCIESGIFLCMAV. The Cytoplasmic segment spans residues 127-145; the sequence is DRYIAICRPLQYPSIVTKA. The helical transmembrane segment at 146–166 threads the bilayer; sequence FVFKATGFIMLRNGLLTIPVP. The Extracellular portion of the chain corresponds to 167–202; that stretch reads ILAAQRHYCSRNEIEHCLCSNLGVISLACDDITVNK. A helical membrane pass occupies residues 203–223; it reads FYQLMLAWVLVGSDMALVFSS. Over 224–243 the chain is Cytoplasmic; the sequence is YAVILHSVLRLNSAEAMSKA. A helical membrane pass occupies residues 244–263; sequence LSTCSSHLILILFHTGIIVL. The Extracellular portion of the chain corresponds to 264 to 277; sequence SVTHLAEKKIPLIP. The helical transmembrane segment at 278-298 threads the bilayer; the sequence is VFLNVLHNVIPPALNPLACAL. At 299 to 319 the chain is on the cytoplasmic side; it reads RMHKLRLGFQRLLGLGQDVSK.

Belongs to the G-protein coupled receptor 1 family.

The protein localises to the cell membrane. Its function is as follows. Odorant receptor. The sequence is that of Olfactory receptor 56B4 (OR56B4) from Homo sapiens (Human).